The following is a 520-amino-acid chain: Interferon lambda receptor 1 (520 aa).

The first 20 residues, 1–20 (MAGPERWGPLLLCLLQAAPG), serve as a signal peptide directing secretion. Over 21–228 (RPRLAPPQNV…LLEVPEANWA (208 aa)) the chain is Extracellular. The Fibronectin type-III domain occupies 26–126 (PPQNVTLLSQ…LDYLFEVEPA (101 aa)). 2 N-linked (GlcNAc...) asparagine glycosylation sites follow: asparagine 29 and asparagine 36. Cystine bridges form between cysteine 74–cysteine 82 and cysteine 86–cysteine 150. 2 N-linked (GlcNAc...) asparagine glycosylation sites follow: asparagine 142 and asparagine 169. Cysteine 195 and cysteine 217 are joined by a disulfide. Residues 229-249 (FLVLPSLLILLLVIAAGGVIW) form a helical membrane-spanning segment. Residues 250–520 (KTLMGNPWFQ…GRTLGHYMAR (271 aa)) are Cytoplasmic-facing. 2 disordered regions span residues 302 to 439 (VRPT…FLEE) and 477 to 520 (ESSP…YMAR). Positions 323–336 (AEDEEEEDEEDTED) are enriched in acidic residues. Over residues 380–392 (SSAWDSSDRSWAS) the composition is skewed to low complexity. A compositionally biased stretch (acidic residues) spans 479-495 (SPEEEEEARESEIEDSD).

Belongs to the type II cytokine receptor family. As to quaternary structure, heterodimer with IL10RB. Post-translationally, ubiquitinated by FBXO45-containing E3 ligase leading to proteasomal degradation. Widely expressed.

Its subcellular location is the membrane. In terms of biological role, the IFNLR1/IL10RB dimer is a receptor for the cytokine ligands IFNL2 and IFNL3 and mediates their antiviral activity. The ligand/receptor complex stimulate the activation of the JAK/STAT signaling pathway leading to the expression of IFN-stimulated genes (ISG), which contribute to the antiviral state. Determines the cell type specificity of the lambda interferon action. Shows a more restricted pattern of expression in the epithelial tissues thereby limiting responses to lambda interferons primarily to epithelial cells of the respiratory, gastrointestinal, and reproductive tracts. Seems not to be essential for early virus-activated host defense in vaginal infection, but plays an important role in Toll-like receptor (TLR)-induced antiviral defense. Plays a significant role in the antiviral immune defense in the intestinal epithelium. This is Interferon lambda receptor 1 (IFNLR1) from Homo sapiens (Human).